A 330-amino-acid polypeptide reads, in one-letter code: MPHSVALRGPSPWGFRLVGGKDFSTPLTISRINPGSKAALANLCPGDIILAINGESTEAMTHLEAQNKIKACVEQLLLSVSRAEERSWSPPILEDGKAQAYRINIEPEPQDNGPAVGKRPMPHAAGGSPVDSRPALSLQHPQPSRPHASSSADAALPLQLSGLHISPSQSTDPLKSLPRNRNGIDVESDVYKMLQDYERPASEPKQSGSFRYLQGMLEAGENGEKLDRLSNPRSIKPAGPKLGAAMSGLQMLPECTRCGNGIVGTIVKARDKLYHPECFMCDDCGLNLKQRGYFFIEEQLYCETHAKERVKPPEGYDVVAVYPNAKVELV.

The region spanning 8 to 84 is the PDZ domain; sequence RGPSPWGFRL…QLLLSVSRAE (77 aa). Disordered stretches follow at residues 106–152 and 163–182; these read EPEP…SSSA and LHISPSQSTDPLKSLPRNRN. The segment covering 139–152 has biased composition (polar residues); it reads QHPQPSRPHASSSA. An LIM zinc-binding domain is found at 255–305; sequence CTRCGNGIVGTIVKARDKLYHPECFMCDDCGLNLKQRGYFFIEEQLYCETH.

Interacts (via LIM domain) with PTPN13. Interacts (via PDZ domain) with ACTN1.

It localises to the cytoplasm. Its subcellular location is the cytoskeleton. It is found in the cell projection. The protein resides in the dendritic spine. The protein localises to the early endosome membrane. It localises to the recycling endosome membrane. Its subcellular location is the nucleus. It is found in the perinuclear region. The protein resides in the lamellipodium. The protein localises to the synapse. It localises to the synaptosome. Its function is as follows. Suppresses SRC activation by recognizing and binding to active SRC and facilitating PTPN13-mediated dephosphorylation of SRC 'Tyr-419' leading to its inactivation. Inactivated SRC dissociates from this protein allowing the initiation of a new SRC inactivation cycle. Involved in reorganization of the actin cytoskeleton. In nonmuscle cells, binds to ACTN1 (alpha-actinin-1), increases the affinity of ACTN1 to F-actin (filamentous actin), and promotes formation of actin stress fibers. Involved in regulation of the synaptic AMPA receptor transport in dendritic spines of hippocampal pyramidal neurons directing the receptors toward an insertion at the postsynaptic membrane. Links endosomal surface-internalized GRIA1-containing AMPA receptors to the alpha-actinin/actin cytoskeleton. Increases AMPA receptor-mediated excitatory postsynaptic currents in neurons. The protein is PDZ and LIM domain protein 4 (PDLIM4) of Gallus gallus (Chicken).